A 580-amino-acid polypeptide reads, in one-letter code: E3 ubiquitin-protein ligase TRIM45 (580 aa).

The RING-type zinc-finger motif lies at 29–98 (CPLCMGLFKA…QIGILCPVCD (70 aa)). B box-type zinc fingers lie at residues 130-176 (GQGL…MVDL) and 186-227 (GKPI…CDFT). Zn(2+)-binding residues include C135, C138, C158, H162, C191, H194, C214, and H219. The stretch at 281–335 (SEGYIKAIEEHRDKLLKQLEDIRVQKENSLQLQKAQLEQLLADMRTGVEFTEHLL) forms a coiled coil. Residues 394-497 (TKEVDPAKCV…VQGSPFTVTV (104 aa)) form a Filamin repeat.

It belongs to the TRIM/RBCC family.

It is found in the cytoplasm. It localises to the nucleus. It carries out the reaction S-ubiquitinyl-[E2 ubiquitin-conjugating enzyme]-L-cysteine + [acceptor protein]-L-lysine = [E2 ubiquitin-conjugating enzyme]-L-cysteine + N(6)-ubiquitinyl-[acceptor protein]-L-lysine.. Its function is as follows. E3 ubiquitin-protein ligase that plays a role in the regulation of inflammatory response. Mechanistically, mediates the 'Lys-48'-linked polyubiquitination of TAB2, a regulatory protein of the kinase TAK1, leading to its degradation via the proteasomal pathway and inhibition of the TLR-mediated inflammatory immune response. May act as a transcriptional repressor in mitogen-activated protein kinase signaling pathway. This Bos taurus (Bovine) protein is E3 ubiquitin-protein ligase TRIM45 (TRIM45).